A 715-amino-acid polypeptide reads, in one-letter code: Interferon-induced GTP-binding protein Mx2 (715 aa).

The segment covering 1 to 14 (MSKAHKSWPHRRRN) has biased composition (basic residues). Disordered regions lie at residues 1-24 (MSKA…SLKK) and 69-88 (NNQP…PENN). Positions 69–80 (NNQPLPGNTSQP) are enriched in polar residues. Residues 115-387 (DLALPAIAVI…LITHIQKSLP (273 aa)) enclose the Dynamin-type G domain. Residues 125–132 (GDQSSGKS) are G1 motif. Residue 125–132 (GDQSSGKS) participates in GTP binding. The segment at 150 to 152 (VTR) is G2 motif. A G3 motif region spans residues 225–228 (DLPG). Residues 225–229 (DLPGI) and 294–297 (TKPD) contribute to the GTP site. The tract at residues 294 to 297 (TKPD) is G4 motif. The segment at 326–329 (KCRG) is G5 motif. Residues 623–714 (FNEIGVHLNA…ALCQFSSKEI (92 aa)) enclose the GED domain.

Belongs to the TRAFAC class dynamin-like GTPase superfamily. Dynamin/Fzo/YdjA family.

The protein localises to the cytoplasm. It is found in the nucleus. Its function is as follows. Interferon-induced dynamin-like GTPase with antiviral activity. This chain is Interferon-induced GTP-binding protein Mx2 (MX2), found in Macaca mulatta (Rhesus macaque).